Consider the following 213-residue polypeptide: ATP synthase peripheral stalk subunit OSCP, mitochondrial (213 aa).

Residues 1 to 23 (MAALAVSGLSQQVRCFSTSVVRP) constitute a mitochondrion transit peptide. Residues 5-23 (AVSGLSQQVRCFSTSVVRP) carry the SIFI-degron motif. N6-acetyllysine occurs at positions 54, 60, 70, and 73. K90 carries the N6-succinyllysine modification. N6-acetyllysine; alternate occurs at positions 100, 158, and 162. N6-succinyllysine; alternate occurs at positions 100, 158, and 162. 3 positions are modified to N6-acetyllysine: K172, K176, and K192. K199 is subject to N6-succinyllysine.

This sequence belongs to the ATPase delta chain family. In terms of assembly, component of the ATP synthase complex composed at least of ATP5F1A/subunit alpha, ATP5F1B/subunit beta, ATP5MC1/subunit c (homooctomer), MT-ATP6/subunit a, MT-ATP8/subunit 8, ATP5ME/subunit e, ATP5MF/subunit f, ATP5MG/subunit g, ATP5MK/subunit k, ATP5MJ/subunit j, ATP5F1C/subunit gamma, ATP5F1D/subunit delta, ATP5F1E/subunit epsilon, ATP5PF/subunit F6, ATP5PB/subunit b, ATP5PD/subunit d, ATP5PO/subunit OSCP. ATP synthase complex consists of a soluble F(1) head domain (subunits alpha(3) and beta(3)) - the catalytic core - and a membrane F(0) domain - the membrane proton channel (subunits c, a, 8, e, f, g, k and j). These two domains are linked by a central stalk (subunits gamma, delta, and epsilon) rotating inside the F1 region and a stationary peripheral stalk (subunits F6, b, d, and OSCP). Post-translationally, acetylation at Lys-162 decreases ATP production. Deacetylated by SIRT3. In response to mitochondrial stress, the precursor protein is ubiquitinated by the SIFI complex in the cytoplasm before mitochondrial import, leading to its degradation. Within the SIFI complex, UBR4 initiates ubiquitin chain that are further elongated or branched by KCMF1.

Its subcellular location is the mitochondrion. The protein localises to the mitochondrion inner membrane. Functionally, subunit OSCP, of the mitochondrial membrane ATP synthase complex (F(1)F(0) ATP synthase or Complex V) that produces ATP from ADP in the presence of a proton gradient across the membrane which is generated by electron transport complexes of the respiratory chain. ATP synthase complex consist of a soluble F(1) head domain - the catalytic core - and a membrane F(1) domain - the membrane proton channel. These two domains are linked by a central stalk rotating inside the F(1) region and a stationary peripheral stalk. During catalysis, ATP synthesis in the catalytic domain of F(1) is coupled via a rotary mechanism of the central stalk subunits to proton translocation. In vivo, can only synthesize ATP although its ATP hydrolase activity can be activated artificially in vitro. Part of the complex F(0) domain. Part of the complex F(0) domain and the peripheric stalk, which acts as a stator to hold the catalytic alpha(3)beta(3) subcomplex and subunit a/ATP6 static relative to the rotary elements. The chain is ATP synthase peripheral stalk subunit OSCP, mitochondrial from Bos taurus (Bovine).